A 68-amino-acid chain; its full sequence is P21 prophage-derived head-stabilizing protein (68 aa).

This sequence belongs to the lambda phage gpW family.

This is P21 prophage-derived head-stabilizing protein from Escherichia coli O6:H1 (strain CFT073 / ATCC 700928 / UPEC).